The sequence spans 760 residues: Elongator complex protein 2 (760 aa).

WD repeat units lie at residues 49–93, 97–134, 139–182, 189–231, 266–305, 324–363, 368–407, 414–453, 576–615, 622–663, 668–711, and 721–760; these read GHSG…FTCI, ELEA…RNLT, FTCS…SSFK, GHLD…SEDE, GHED…GIWV, GSAG…WLQL, GHTK…NAWH, IHGY…VRLL, GHSL…LDYN, AHSR…KICD, QFSD…LTKW, and APME…VTLG.

The protein belongs to the WD repeat ELP2 family. In terms of assembly, component of the elongator complex.

Its subcellular location is the cytoplasm. The protein localises to the nucleus. It functions in the pathway tRNA modification; 5-methoxycarbonylmethyl-2-thiouridine-tRNA biosynthesis. In terms of biological role, component of the elongator complex which is required for multiple tRNA modifications, including mcm5U (5-methoxycarbonylmethyl uridine), mcm5s2U (5-methoxycarbonylmethyl-2-thiouridine), and ncm5U (5-carbamoylmethyl uridine). The elongator complex catalyzes formation of carboxymethyluridine in the wobble base at position 34 in tRNAs. This is Elongator complex protein 2 (elp2) from Schizosaccharomyces pombe (strain 972 / ATCC 24843) (Fission yeast).